The sequence spans 187 residues: Adenylate kinase (187 aa).

Residue 10–15 participates in ATP binding; the sequence is GSGKGT. Residues 30 to 59 are NMP; that stretch reads STGDMLRAEIAAGSELGKQAKAVMDAGNLV. AMP contacts are provided by residues Thr-31, Arg-36, 57 to 59, 85 to 88, and Gln-92; these read NLV and GYPR. Residues 126 to 136 form an LID region; sequence GRAKEQGRADD. Arg-127 serves as a coordination point for ATP. AMP is bound by residues Arg-133 and Arg-144. ATP is bound at residue Gly-172.

The protein belongs to the adenylate kinase family. In terms of assembly, monomer.

The protein resides in the cytoplasm. The enzyme catalyses AMP + ATP = 2 ADP. The protein operates within purine metabolism; AMP biosynthesis via salvage pathway; AMP from ADP: step 1/1. Functionally, catalyzes the reversible transfer of the terminal phosphate group between ATP and AMP. Plays an important role in cellular energy homeostasis and in adenine nucleotide metabolism. The protein is Adenylate kinase of Stenotrophomonas maltophilia (strain R551-3).